Here is a 99-residue protein sequence, read N- to C-terminus: Acylphosphatase (99 aa).

The Acylphosphatase-like domain maps to 5 to 97; that stretch reads VRQVMIRGRV…RPGERFSQLP (93 aa). Active-site residues include R20 and N38.

It belongs to the acylphosphatase family.

The enzyme catalyses an acyl phosphate + H2O = a carboxylate + phosphate + H(+). This chain is Acylphosphatase (acyP), found in Nitrobacter winogradskyi (strain ATCC 25391 / DSM 10237 / CIP 104748 / NCIMB 11846 / Nb-255).